Reading from the N-terminus, the 147-residue chain is Large ribosomal subunit protein uL15 (147 aa).

The interval 1–42 (MTIKVHHLRPAPGAKTTKTRVGRGEGSKGKTAGRGTKGSKAR) is disordered.

It belongs to the universal ribosomal protein uL15 family. As to quaternary structure, part of the 50S ribosomal subunit.

Its function is as follows. Binds to the 23S rRNA. This is Large ribosomal subunit protein uL15 from Salinispora tropica (strain ATCC BAA-916 / DSM 44818 / JCM 13857 / NBRC 105044 / CNB-440).